We begin with the raw amino-acid sequence, 183 residues long: Isopentenyl-diphosphate Delta-isomerase (183 aa).

2 residues coordinate Mn(2+): His-26 and His-33. In terms of domain architecture, Nudix hydrolase spans 31 to 169 (PLHFAFSCYV…PFAFSPWMVE (139 aa)). Cys-68 is an active-site residue. Cys-68 serves as a coordination point for Mg(2+). Mn(2+) is bound at residue His-70. A Mg(2+)-binding site is contributed by Glu-88. Mn(2+) is bound by residues Glu-118 and Glu-120. Residue Glu-120 is part of the active site.

It belongs to the IPP isomerase type 1 family. Mg(2+) serves as cofactor. It depends on Mn(2+) as a cofactor.

The protein resides in the cytoplasm. It catalyses the reaction isopentenyl diphosphate = dimethylallyl diphosphate. The protein operates within isoprenoid biosynthesis; dimethylallyl diphosphate biosynthesis; dimethylallyl diphosphate from isopentenyl diphosphate: step 1/1. In terms of biological role, catalyzes the 1,3-allylic rearrangement of the homoallylic substrate isopentenyl (IPP) to its highly electrophilic allylic isomer, dimethylallyl diphosphate (DMAPP). The polypeptide is Isopentenyl-diphosphate Delta-isomerase (Corynebacterium diphtheriae (strain ATCC 700971 / NCTC 13129 / Biotype gravis)).